We begin with the raw amino-acid sequence, 570 residues long: Protein translocase subunit SecD (570 aa).

Polar residues predominate over residues 104 to 117 (GANATGTPSASETG). A disordered region spans residues 104–198 (GANATGTPSA…SASASGDDAT (95 aa)). The segment covering 122 to 146 (KATDKATDKATDKATDGDKATDGDK) has biased composition (basic and acidic residues). Low complexity-rich tracts occupy residues 147–161 (ASGT…SATS) and 172–196 (ADPS…SGDD). 5 helical membrane-spanning segments follow: residues 370–390 (AGLI…LFYY), 395–415 (FIAV…MALL), 419–439 (IGFA…GITA), 474–494 (ILVS…VTVG), and 498–518 (GFAF…FLFT). The disordered stretch occupies residues 540–570 (LDPKALGAKPPLRRTRRPSRPAAGPVDPKEA).

Belongs to the SecD/SecF family. SecD subfamily. In terms of assembly, forms a complex with SecF. Part of the essential Sec protein translocation apparatus which comprises SecA, SecYEG and auxiliary proteins SecDF. Other proteins may also be involved.

It is found in the cell membrane. Functionally, part of the Sec protein translocase complex. Interacts with the SecYEG preprotein conducting channel. SecDF uses the proton motive force (PMF) to complete protein translocation after the ATP-dependent function of SecA. The polypeptide is Protein translocase subunit SecD (Streptomyces coelicolor (strain ATCC BAA-471 / A3(2) / M145)).